The chain runs to 159 residues: Phosphopantetheine adenylyltransferase (159 aa).

Position 10 (T10) interacts with substrate. Residues 10–11 (TF) and H18 contribute to the ATP site. Positions 42, 74, and 88 each coordinate substrate. Residues 89–91 (GLR), E99, and 124–130 (FAYVSSS) each bind ATP.

This sequence belongs to the bacterial CoaD family. As to quaternary structure, homohexamer. It depends on Mg(2+) as a cofactor.

The protein resides in the cytoplasm. It carries out the reaction (R)-4'-phosphopantetheine + ATP + H(+) = 3'-dephospho-CoA + diphosphate. It functions in the pathway cofactor biosynthesis; coenzyme A biosynthesis; CoA from (R)-pantothenate: step 4/5. Functionally, reversibly transfers an adenylyl group from ATP to 4'-phosphopantetheine, yielding dephospho-CoA (dPCoA) and pyrophosphate. The polypeptide is Phosphopantetheine adenylyltransferase (Thioalkalivibrio sulfidiphilus (strain HL-EbGR7)).